We begin with the raw amino-acid sequence, 366 residues long: Mannonate dehydratase (366 aa).

The protein belongs to the mannonate dehydratase family. Fe(2+) serves as cofactor. The cofactor is Mn(2+).

The enzyme catalyses D-mannonate = 2-dehydro-3-deoxy-D-gluconate + H2O. Its pathway is carbohydrate metabolism; pentose and glucuronate interconversion. Catalyzes the dehydration of D-mannonate. The chain is Mannonate dehydratase from Streptococcus suis (strain 98HAH33).